The sequence spans 102 residues: uncharacterized protein (102 aa).

Helical transmembrane passes span 33–55 (VLEL…LVVL) and 57–79 (VVGV…VVVA).

The protein localises to the membrane. This is an uncharacterized protein from Saccharomyces cerevisiae (strain ATCC 204508 / S288c) (Baker's yeast).